A 166-amino-acid polypeptide reads, in one-letter code: uncharacterized protein (166 aa).

3 stretches are compositionally biased toward basic and acidic residues: residues 1 to 13 (MAEVSKKRCEHNS), 21 to 112 (KAND…KTKE), and 119 to 137 (DNVENKDKNEVYENIKEGG). Residues 1–144 (MAEVSKKRCE…EGGSKAWNKT (144 aa)) form a disordered region. 8 tandem repeats follow at residues 31–41 (DKTKETAGSAK), 42–52 (DKTKETAGSAK), 53–63 (DKTKETAESAK), 64–74 (DKTKETAGSAK), 75–85 (DKTKETAESAK), 86–96 (DKTKETAGSAK), 97–107 (DKTKETAESAK), and 108–118 (DKTKETAGNVR). Residues 31-118 (DKTKETAGSA…KTKETAGNVR (88 aa)) are 8 X 11 AA approximate tandem repeats of D-K-T-K-E-T-A-G/E-S-A-K.

This sequence belongs to the LEA type 1 family.

This is an uncharacterized protein from Encephalitozoon cuniculi (strain GB-M1) (Microsporidian parasite).